The primary structure comprises 147 residues: Thyrotropin subunit beta (147 aa).

Residues 1–20 form the signal peptide; the sequence is MRVVLLASGVLCLLAGQVLS. 6 disulfides stabilise this stretch: cysteine 22–cysteine 72, cysteine 36–cysteine 87, cysteine 39–cysteine 126, cysteine 47–cysteine 103, cysteine 51–cysteine 105, and cysteine 108–cysteine 115. The N-linked (GlcNAc...) asparagine glycan is linked to asparagine 43.

Belongs to the glycoprotein hormones subunit beta family. In terms of assembly, heterodimer of a common alpha chain and a unique beta chain which confers biological specificity to thyrotropin, lutropin, follitropin and gonadotropin.

The protein localises to the secreted. Its function is as follows. Indispensable for the control of thyroid structure and metabolism. May play some role in the biological processes of the immature fishes. This is Thyrotropin subunit beta (tshb) from Anguilla japonica (Japanese eel).